We begin with the raw amino-acid sequence, 1762 residues long: Lysine-specific demethylase 3B (1762 aa).

Alanine 2 carries the post-translational modification N-acetylalanine. 2 disordered regions span residues 253–350 (MDSS…FVPQ) and 426–468 (TTAS…NSSL). The span at 299–310 (ATKKLKGDRGEV) shows a compositional bias: basic and acidic residues. Residues 426-435 (TTASSTPTTV) are compositionally biased toward low complexity. Residues 453–465 (GSWSQASGENSRN) show a composition bias toward polar residues. Serine 493, serine 547, serine 557, and serine 561 each carry phosphoserine. The segment at 574–613 (SVLGADTQPGPKAGSSVDRKVPAESMPTLTPAFPRSLLNT) is disordered. Threonine 615 carries the post-translational modification Phosphothreonine. Positions 713–746 (TGSPSLSAVGNGRSSSPTNSLTQPIEMPTLSSSP) are enriched in polar residues. The disordered stretch occupies residues 713-763 (TGSPSLSAVGNGRSSSPTNSLTQPIEMPTLSSSPTEERPTVGPGQQDNPLL). Serine 767, serine 774, and serine 779 each carry phosphoserine. Lysine 789 is covalently cross-linked (Glycyl lysine isopeptide (Lys-Gly) (interchain with G-Cter in SUMO2)). Position 799 is a phosphoserine (serine 799). The disordered stretch occupies residues 806–853 (ACRQDSDSSTNSDLSDLSDSEEQLQAKSGLKGIPEHLMGKLGPNGERS). A C6-type zinc finger spans residues 1032-1057 (CDVCETTLFNIHWVCRKCGFGVCLDC). The segment covering 1146-1163 (QLPSVTPSASSGNETTFS) has biased composition (polar residues). Residues 1146–1217 (QLPSVTPSAS…AIRPPCPDTA (72 aa)) form a disordered region. Residues serine 1254 and serine 1260 each carry the phosphoserine modification. A disordered region spans residues 1285–1306 (SNSKTEGSSLRDLLHSGPGKLP). The LXXLL motif motif lies at 1294–1298 (LRDLL). In terms of domain architecture, JmjC spans 1499-1722 (MPTRFEDLME…HCFRLTQEFR (224 aa)). The Fe cation site is built by histidine 1561, aspartate 1563, and histidine 1690.

This sequence belongs to the JHDM2 histone demethylase family. Requires Fe(2+) as cofactor.

The protein localises to the nucleus. The enzyme catalyses N(6),N(6)-dimethyl-L-lysyl(9)-[histone H3] + 2 2-oxoglutarate + 2 O2 = L-lysyl(9)-[histone H3] + 2 formaldehyde + 2 succinate + 2 CO2. Functionally, histone demethylase that specifically demethylates 'Lys-9' of histone H3, thereby playing a central role in histone code. Demethylation of Lys residue generates formaldehyde and succinate May have tumor suppressor activity. This is Lysine-specific demethylase 3B (Kdm3b) from Mus musculus (Mouse).